The following is a 664-amino-acid chain: MDSSTWSPPATATAEPLQAYERIRNAADISVIVIYFVVVMAVGLWAMFSTNRGTVGGFFLAGRSMVWWPIGASLFASNIGSGHFVGLAGTGAAAGIATGGFEWNALILVVLLGWVFVPIYIKAGVVTMPEYLRKRFGGQRIQVYLSVLSLVLYIFTKISADIFSGAIFINLALGLDLYLAIFILLAITALYTITGGLAAVIYTDTLQTVIMLLGSFILTGFAFHEVGGYSAFVTKYMNAIPTVTSYGNTTVKKECYTPRADSFHIFRDPLKGDLPWPGLIFGLTIISLWYWCTDQVIVQRCLSAKNMSHVKAGCIMCGYMKLLPMFLMVMPGMISRILFTEKVACTVPSECEKYCGTKVGCTNIAYPTLVVELMPNGLRGLMLSVMLASLMSSLTSIFNSASTLFTMDIYTKIRKKASEKELMIAGRLFMLVLIGVSIAWVPIVQSAQSGQLFDYIQSITSYLGPPIAAVFLLAIFCKRVNEPGAFWGLIIGFLIGVSRMITEFAYGTGSCMEPSNCPTIICGVHYLYFAIILFVITIIVILAISLFTKPIADVHLYRLCWSLRNSKEERIDLDAEDEDIQDAREDALEIDTEASEEKKGCLRQAYDMFCGLDQQKGPKMTKEEEAAMKLKMTDTSEKRLWRMVVNINGIILLAVAVFCHAYFA.

Topologically, residues 1–24 (MDSSTWSPPATATAEPLQAYERIR) are extracellular. The chain crosses the membrane as a helical span at residues 25–47 (NAADISVIVIYFVVVMAVGLWAM). Topologically, residues 48–66 (FSTNRGTVGGFFLAGRSMV) are cytoplasmic. Residues 67-90 (WWPIGASLFASNIGSGHFVGLAGT) form a helical membrane-spanning segment. The Extracellular portion of the chain corresponds to 91–95 (GAAAG). A helical membrane pass occupies residues 96-117 (IATGGFEWNALILVVLLGWVFV). The Cytoplasmic portion of the chain corresponds to 118–139 (PIYIKAGVVTMPEYLRKRFGGQ). Residues 140–169 (RIQVYLSVLSLVLYIFTKISADIFSGAIFI) form a helical membrane-spanning segment. Topologically, residues 170–176 (NLALGLD) are extracellular. The helical transmembrane segment at 177-193 (LYLAIFILLAITALYTI) threads the bilayer. At 194-202 (TGGLAAVIY) the chain is on the cytoplasmic side. A helical transmembrane segment spans residues 203 to 221 (TDTLQTVIMLLGSFILTGF). Over 222–275 (AFHEVGGYSAFVTKYMNAIPTVTSYGNTTVKKECYTPRADSFHIFRDPLKGDLP) the chain is Extracellular. N-linked (GlcNAc...) asparagine glycosylation occurs at Asn-248. 5 disulfides stabilise this stretch: Cys-255–Cys-511, Cys-255–Cys-610, Cys-345–Cys-351, Cys-355–Cys-361, and Cys-517–Cys-522. A helical transmembrane segment spans residues 276-295 (WPGLIFGLTIISLWYWCTDQ). The Cytoplasmic portion of the chain corresponds to 296–309 (VIVQRCLSAKNMSH). Residues 310 to 331 (VKAGCIMCGYMKLLPMFLMVMP) form a helical membrane-spanning segment. The Extracellular portion of the chain corresponds to 332–375 (GMISRILFTEKVACTVPSECEKYCGTKVGCTNIAYPTLVVELMP). Residues 376-406 (NGLRGLMLSVMLASLMSSLTSIFNSASTLFT) form a helical membrane-spanning segment. Residues 407–422 (MDIYTKIRKKASEKEL) are Cytoplasmic-facing. The chain crosses the membrane as a helical span at residues 423–444 (MIAGRLFMLVLIGVSIAWVPIV). The Extracellular segment spans residues 445 to 451 (QSAQSGQ). A helical transmembrane segment spans residues 452–477 (LFDYIQSITSYLGPPIAAVFLLAIFC). Residue Gln-457 participates in D-glucose binding. The Cytoplasmic segment spans residues 478–481 (KRVN). A helical membrane pass occupies residues 482–504 (EPGAFWGLIIGFLIGVSRMITEF). Topologically, residues 505–525 (AYGTGSCMEPSNCPTIICGVH) are extracellular. Residues 526–547 (YLYFAIILFVITIIVILAISLF) form a helical membrane-spanning segment. Residues 548-644 (TKPIADVHLY…TSEKRLWRMV (97 aa)) are Cytoplasmic-facing. Residues 645–662 (VNINGIILLAVAVFCHAY) form a helical membrane-spanning segment. The Extracellular portion of the chain corresponds to 663-664 (FA).

Belongs to the sodium:solute symporter (SSF) (TC 2.A.21) family. In terms of processing, N-glycosylation is not necessary for the cotransporter function.

It localises to the apical cell membrane. It catalyses the reaction D-glucose(out) + 2 Na(+)(out) = D-glucose(in) + 2 Na(+)(in). It carries out the reaction D-galactose(out) + 2 Na(+)(out) = D-galactose(in) + 2 Na(+)(in). Its activity is regulated as follows. Enhanced by the interaction with PDZK1IP1/MAP17; but unlike SLC5A2/SGLT2, PDZK1IP1 is not essential for SLC5A1 transporter activity. Possibly modulated by cholesterol binding. Its function is as follows. Electrogenic Na(+)-coupled sugar symporter that actively transports D-glucose or D-galactose at the plasma membrane, with a Na(+) to sugar coupling ratio of 2:1. Transporter activity is driven by a transmembrane Na(+) electrochemical gradient set by the Na(+)/K(+) pump. Has a primary role in the transport of dietary monosaccharides from enterocytes to blood. Responsible for the absorption of D-glucose or D-galactose across the apical brush-border membrane of enterocytes, whereas basolateral exit is provided by GLUT2. Additionally, functions as a D-glucose sensor in enteroendocrine cells, triggering the secretion of the incretins GCG and GIP that control food intake and energy homeostasis. Together with SGLT2, functions in reabsorption of D-glucose from glomerular filtrate, playing a nonredundant role in the S3 segment of the proximal tubules. Transports D-glucose into endometrial epithelial cells, controlling glycogen synthesis and nutritional support for the embryo as well as the decidual transformation of endometrium prior to conception. Acts as a water channel enabling passive water transport in response to the osmotic gradient created upon sugar and Na(+) uptake. Has high water conductivity comparable to aquaporins and therefore is expected to play an important role in transepithelial water permeability, especially in the small intestine. This chain is Sodium/glucose cotransporter 1 (SLC5A1), found in Ovis aries (Sheep).